Here is a 311-residue protein sequence, read N- to C-terminus: Ribosomal RNA small subunit methyltransferase H (311 aa).

S-adenosyl-L-methionine is bound by residues 34–36 (GGY), Asp-51, Phe-75, Asp-93, and Gln-100.

Belongs to the methyltransferase superfamily. RsmH family.

It is found in the cytoplasm. The enzyme catalyses cytidine(1402) in 16S rRNA + S-adenosyl-L-methionine = N(4)-methylcytidine(1402) in 16S rRNA + S-adenosyl-L-homocysteine + H(+). Specifically methylates the N4 position of cytidine in position 1402 (C1402) of 16S rRNA. The polypeptide is Ribosomal RNA small subunit methyltransferase H (Caulobacter vibrioides (strain ATCC 19089 / CIP 103742 / CB 15) (Caulobacter crescentus)).